The sequence spans 244 residues: tRNA pseudouridine synthase A (244 aa).

D52 acts as the Nucleophile in catalysis. Y110 contacts substrate.

The protein belongs to the tRNA pseudouridine synthase TruA family. Homodimer.

It catalyses the reaction uridine(38/39/40) in tRNA = pseudouridine(38/39/40) in tRNA. Formation of pseudouridine at positions 38, 39 and 40 in the anticodon stem and loop of transfer RNAs. This Caldicellulosiruptor saccharolyticus (strain ATCC 43494 / DSM 8903 / Tp8T 6331) protein is tRNA pseudouridine synthase A.